Reading from the N-terminus, the 212-residue chain is Imidazole glycerol phosphate synthase subunit HisH (212 aa).

Residues 3-212 (SIAVVDYGMG…LLSNFLKWTP (210 aa)) form the Glutamine amidotransferase type-1 domain. Cysteine 82 serves as the catalytic Nucleophile. Residues histidine 192 and glutamate 194 contribute to the active site.

In terms of assembly, heterodimer of HisH and HisF.

The protein localises to the cytoplasm. The catalysed reaction is 5-[(5-phospho-1-deoxy-D-ribulos-1-ylimino)methylamino]-1-(5-phospho-beta-D-ribosyl)imidazole-4-carboxamide + L-glutamine = D-erythro-1-(imidazol-4-yl)glycerol 3-phosphate + 5-amino-1-(5-phospho-beta-D-ribosyl)imidazole-4-carboxamide + L-glutamate + H(+). It carries out the reaction L-glutamine + H2O = L-glutamate + NH4(+). Its pathway is amino-acid biosynthesis; L-histidine biosynthesis; L-histidine from 5-phospho-alpha-D-ribose 1-diphosphate: step 5/9. In terms of biological role, IGPS catalyzes the conversion of PRFAR and glutamine to IGP, AICAR and glutamate. The HisH subunit catalyzes the hydrolysis of glutamine to glutamate and ammonia as part of the synthesis of IGP and AICAR. The resulting ammonia molecule is channeled to the active site of HisF. This is Imidazole glycerol phosphate synthase subunit HisH from Nitrosomonas europaea (strain ATCC 19718 / CIP 103999 / KCTC 2705 / NBRC 14298).